The sequence spans 321 residues: Transaldolase (321 aa).

K132 (schiff-base intermediate with substrate) is an active-site residue.

Belongs to the transaldolase family. Type 1 subfamily. Homodimer.

The protein localises to the cytoplasm. It carries out the reaction D-sedoheptulose 7-phosphate + D-glyceraldehyde 3-phosphate = D-erythrose 4-phosphate + beta-D-fructose 6-phosphate. It functions in the pathway carbohydrate degradation; pentose phosphate pathway; D-glyceraldehyde 3-phosphate and beta-D-fructose 6-phosphate from D-ribose 5-phosphate and D-xylulose 5-phosphate (non-oxidative stage): step 2/3. Its function is as follows. Transaldolase is important for the balance of metabolites in the pentose-phosphate pathway. In Rhizobium etli (strain CIAT 652), this protein is Transaldolase.